Here is a 1108-residue protein sequence, read N- to C-terminus: Retinal guanylyl cyclase 1 (1108 aa).

The N-terminal stretch at 1–54 (MSAWLLPAGGFPGAGFCIPAWQSRSSLSRVLRWPGPGLPGLLLLLLLPSPSAFS) is a signal peptide. Topologically, residues 55 to 465 (AVFKVGVLGP…PDVICNGGVE (411 aa)) are extracellular. The cysteines at positions 108 and 136 are disulfide-linked. An N-linked (GlcNAc...) asparagine glycan is attached at asparagine 300. The helical transmembrane segment at 466–490 (PGLVFVGFLLVIVVGLTGAFLAHYL) threads the bilayer. The Cytoplasmic portion of the chain corresponds to 491 to 1108 (RHRLLHMQMV…KARPGQFTGK (618 aa)). The tract at residues 520–552 (GGSSRKVAQGSRSSLATRSTSDIRSVPSQPQES) is disordered. In terms of domain architecture, Protein kinase spans 520-811 (GGSSRKVAQG…DLTFDLFKGI (292 aa)). Positions 529–552 (GSRSSLATRSTSDIRSVPSQPQES) are enriched in polar residues. Positions 883–1013 (TLYFSDIVGF…DTVNTASRME (131 aa)) constitute a Guanylate cyclase domain. The interval 1069–1108 (IPKPPDLQPGASNHGISLQEIPPERRKKLEKARPGQFTGK) is disordered.

The protein belongs to the adenylyl cyclase class-4/guanylyl cyclase family. As to quaternary structure, homodimer; requires homodimerization for guanylyl cyclase activity. Interacts (via C-terminus) with RD3 (via C-terminus); promotes the exit of GUCY2E from the endoplasmic reticulum and its trafficking to the photoreceptor outer segments. Interaction with RD3 negatively regulates GUCY2E guanylate cyclase activity. Post-translationally, there are 9 conserved cysteine residues in sensory guanylate cyclases, 6 in the extracellular domain, which may be involved in intra- or interchain disulfide bonds. Expressed in retina and enriched in photoreceptor outer segments.

The protein resides in the membrane. Its subcellular location is the photoreceptor outer segment membrane. The protein localises to the endoplasmic reticulum membrane. The enzyme catalyses GTP = 3',5'-cyclic GMP + diphosphate. With respect to regulation, activated by GUCA1A when free calcium ions concentration is low, and inhibited by GUCA1A when free calcium ions concentration is high. Negatively regulated by RD3; inhibits the basal and GUCA1A-stimulated guanylate cyclase activity. In terms of biological role, catalyzes the synthesis of cyclic GMP (cGMP) in rods and cones of photoreceptors. Plays an essential role in phototransduction, by mediating cGMP replenishment. May also participate in the trafficking of membrane-asociated proteins to the photoreceptor outer segment membrane. The polypeptide is Retinal guanylyl cyclase 1 (Gucy2e) (Rattus norvegicus (Rat)).